The sequence spans 213 residues: Pyrrolidone-carboxylate peptidase (213 aa).

Residues Glu81, Cys144, and His166 contribute to the active site.

This sequence belongs to the peptidase C15 family. Homodimer.

It localises to the cytoplasm. The enzyme catalyses Release of an N-terminal pyroglutamyl group from a polypeptide, the second amino acid generally not being Pro.. Functionally, removes 5-oxoproline from various penultimate amino acid residues except L-proline. This chain is Pyrrolidone-carboxylate peptidase (pcp), found in Pseudomonas fluorescens.